Here is a 56-residue protein sequence, read N- to C-terminus: VPANCLLPMKVGFCRAHVPRFYYNSSSGKCEGFTYGGCGANANNFQTKAQCEKACR.

In terms of domain architecture, BPTI/Kunitz inhibitor spans Cys5–Cys55. 3 cysteine pairs are disulfide-bonded: Cys5–Cys55, Cys14–Cys38, and Cys30–Cys51.

Belongs to the venom Kunitz-type family. Sea anemone type 2 potassium channel toxin subfamily. As to expression, expressed by acrorhagi.

It is found in the secreted. The protein resides in the nematocyst. Its function is as follows. Serine protease inhibitor that is strongly active against trypsin (950 IU/mg) and moderately active against plasmin. This Anthopleura fuscoviridis (Sea anemone) protein is PI-actitoxin-Afv2a.